A 426-amino-acid polypeptide reads, in one-letter code: Adenylosuccinate synthetase (426 aa).

GTP contacts are provided by residues 14 to 20 (GDEGKGK) and 42 to 44 (GHT). Residue aspartate 15 is the Proton acceptor of the active site. Mg(2+) is bound by residues aspartate 15 and glycine 42. IMP-binding positions include 15 to 18 (DEGK), 40 to 43 (NAGH), threonine 130, arginine 144, glutamine 224, threonine 239, and arginine 303. Catalysis depends on histidine 43, which acts as the Proton donor. 299 to 305 (TVTKRPR) serves as a coordination point for substrate. Residues arginine 305, 331 to 333 (LID), and 413 to 415 (SVG) each bind GTP.

This sequence belongs to the adenylosuccinate synthetase family. Homodimer. Requires Mg(2+) as cofactor.

It is found in the cytoplasm. The enzyme catalyses IMP + L-aspartate + GTP = N(6)-(1,2-dicarboxyethyl)-AMP + GDP + phosphate + 2 H(+). Its pathway is purine metabolism; AMP biosynthesis via de novo pathway; AMP from IMP: step 1/2. In terms of biological role, plays an important role in the de novo pathway of purine nucleotide biosynthesis. Catalyzes the first committed step in the biosynthesis of AMP from IMP. The polypeptide is Adenylosuccinate synthetase (Malacoplasma penetrans (strain HF-2) (Mycoplasma penetrans)).